Reading from the N-terminus, the 355-residue chain is Spore germination protein XB (355 aa).

The next 10 helical transmembrane spans lie at 2-24 (VNFFQIALVLIGSTGIINHVIII), 34-56 (DSWISIIILSLVYIIWIPCVFIV), 69-91 (LMRNYGGFITYPLLSIIVLYLII), 106-128 (FYLPETPRILLGVLLSIICFYNI), 135-157 (IALTTGILLPVVFLLGFFVMIAN), 180-197 (GMIYPAAGFVELIFILFL), 210-232 (LIIVGIILAGITLGPTIAAIVEF), 265-287 (VYQWLVGVFIRISLVIFLIPDVL), 299-321 (ISILLICMVIICILPISDASFYW), and 326-348 (VFLPISAIGLFLFSMLLLVFVWV).

It belongs to the amino acid-polyamine-organocation (APC) superfamily. Spore germination protein (SGP) (TC 2.A.3.9) family.

It is found in the cell membrane. May allow B.anthracis to germinate within phagocytic cells and therefore involved in virulence. The protein is Spore germination protein XB (gerXB) of Bacillus anthracis.